A 319-amino-acid polypeptide reads, in one-letter code: MLFWVLGLLILCGFLWTRKGKLKIEDITDKYIFITGCDSGFGNLAARTFDKKGFHVIAACLTESGSTALKAETSERLRTVLLDVTDPENVKRTAQWVKNQVGEKGLWGLINNAGVPGVLAPTDWLTLEDYREPIEVNLFGLISVTLNMLPLVKKAQGRVINVSSVGGRLAIVGGGYTPSKYAVEGFNDSLRRDMKAFGVHVSCIEPGLFKTNLADPVKVIEKKLAIWEQLSPDIKQQYGEGYIEKSLDKLKGNKSYVNMDLSPVVECMDHALTSLFPKTHYAAGKDAKIFWIPLSHMPAALQDFLLLKQKAELANPKAV.

Residues 1–17 (MLFWVLGLLILCGFLWT) form the signal peptide. NAD(+) contacts are provided by residues 34 to 58 (ITGCDSGFGNLAARTFDKKGFHVIA) and aspartate 83. Serine 164 contributes to the substrate binding site. The Proton acceptor role is filled by tyrosine 176. Lysine 180 lines the NAD(+) pocket.

Belongs to the short-chain dehydrogenases/reductases (SDR) family. As to quaternary structure, homotetramer. As to expression, highly expressed in trachea and epidermis. Detected at lower levels in spinal cord, bone marrow, brain, tongue, esophagus, heart, colon, testis, placenta, lung, skeletal muscle and lymph node.

Its subcellular location is the microsome membrane. It localises to the endoplasmic reticulum membrane. The catalysed reaction is 3beta-hydroxy-5alpha-pregnane-20-one + NAD(+) = 5alpha-pregnane-3,20-dione + NADH + H(+). It carries out the reaction 17beta-hydroxy-5alpha-androstan-3-one + NAD(+) = 5alpha-androstan-3,17-dione + NADH + H(+). The enzyme catalyses androsterone + NAD(+) = 5alpha-androstan-3,17-dione + NADH + H(+). It catalyses the reaction 5alpha-androstane-3alpha,17beta-diol + NAD(+) = 17beta-hydroxy-5alpha-androstan-3-one + NADH + H(+). The catalysed reaction is all-trans-retinol + NAD(+) = all-trans-retinal + NADH + H(+). It carries out the reaction 3alpha-hydroxy-5alpha-pregnan-20-one + NAD(+) = 5alpha-pregnane-3,20-dione + NADH + H(+). Functionally, 3-alpha-hydroxysteroid dehydrogenase that converts 3-alpha-tetrahydroprogesterone (allopregnanolone) to dihydroxyprogesterone and 3-alpha-androstanediol to dihydroxyprogesterone. Also plays a role in the biosynthesis of retinoic acid from retinaldehyde. Can utilize both NADH and NADPH. The protein is Dehydrogenase/reductase SDR family member 9 (DHRS9) of Homo sapiens (Human).